A 304-amino-acid chain; its full sequence is DCN1-like protein 3 (304 aa).

Disordered stretches follow at residues 1–87 and 285–304; these read MGQC…EESS and VEGR…EEQT. Glycine 2 is lipidated: N-myristoyl glycine. Residues 86–278 enclose the DCUN1 domain; it reads SSLQRLEELF…LFDTFVEWEM (193 aa).

In terms of assembly, part of a complex containing DCUN1D3, CUL3 and RBX1. Interacts (via the DCUN1 domain) with the unneddylated cullins: interacts with CUL1, CUL2, CUL3, CUL4A, CUL4B and CUL5; these interactions promote the cullin neddylation and the identity of the cullin dictates the affinity of the interaction. Interacts preferentially with CUL3; this interaction triggers the relocalization of CUL3 to the cell membrane where CUL3 is neddylated. Interacts (via DCUN1 domain) with RBX1. May also interact with regulators or subunits of cullin-RING ligases such as RNF7, ELOB and DDB1; these interactions are bridged by cullins. Interacts (via DCUN1 domain) with CAND1; this interaction is bridged by cullins and strongly inhibits cullin neddylation. These CAND-cullin-DCNL complexes can only be neddylated in the presence of a substrate adapter. Interacts (via DCUN1 domain) with the N-terminally acetylated form of UBE2M and UBE2F.

The protein localises to the cell membrane. It localises to the cytoplasm. Its subcellular location is the nucleus. The protein resides in the perinuclear region. Contributes to the neddylation of all cullins by transferring NEDD8 from N-terminally acetylated NEDD8-conjugating E2s enzyme to different cullin C-terminal domain-RBX complexes and may play a role in the cell cycle progression by regulating the SCF ubiquitin E3 ligase complex, after UV damage. At the cell membrane, can promote and as well inhibit cullins neddylation. The polypeptide is DCN1-like protein 3 (Rattus norvegicus (Rat)).